Here is a 691-residue protein sequence, read N- to C-terminus: Elongation factor G (691 aa).

The 275-residue stretch at Glu-8–Val-282 folds into the tr-type G domain. GTP is bound by residues Ala-17–Thr-24, Asp-81–His-85, and Asn-135–Asp-138.

The protein belongs to the TRAFAC class translation factor GTPase superfamily. Classic translation factor GTPase family. EF-G/EF-2 subfamily.

It localises to the cytoplasm. In terms of biological role, catalyzes the GTP-dependent ribosomal translocation step during translation elongation. During this step, the ribosome changes from the pre-translocational (PRE) to the post-translocational (POST) state as the newly formed A-site-bound peptidyl-tRNA and P-site-bound deacylated tRNA move to the P and E sites, respectively. Catalyzes the coordinated movement of the two tRNA molecules, the mRNA and conformational changes in the ribosome. The chain is Elongation factor G from Prochlorococcus marinus (strain MIT 9211).